Consider the following 607-residue polypeptide: MNVVQQTFAELSIGEPEKRVEGRVYSVSGPVVVGCNMIGCAMYELVKVGSEGLAGEIIKIDKDQATIQVYEDTSGLCVGDTIVRTGLPLCAELGPGLFESIYDGIQRPLREIRESSGGIFIPKGVNIPALDREREYEFVPAVSAGDYVVGGDVFGKVYENSLIETKILVPPKKSGKVAFIACRGNYTLKDVVMELETGKGKEEMFMYHTWPVRIPRPIEEKKNATHPLFTGQRILDSLFPCVQGGTTAIPGAFGCGKTVISQSLSKYSNSDAIVYVGCGERGNEMSEVLMEFPKLTVGGKDDSIMKRTVLVANTSNMPVAAREASIYTGITISEYLRDQGMNVSMMADSTSRWAEALREISGRLAEMPADSGYPAYLGAKLAFFYERAGSVVCLGSPRRTGSVTIVGAVSPPGGDFSDPVTSATLGIVQVFWGLDKKLAQRKHFPSINWNLSYSKYFSNLEPYYEEVDPGFIVNRTKCREILQLDDDLSEIVQLVGKNALSETEKLILDISKLIKEDFLQQNGYSRYDNYCPFTKTRLMLRNIILYFDNSKNAITNYKLSWSTIRKETEDVFYGLMKMKFVMADKEMEPKLNKLKREIEGVFLKMLG.

251-258 (GAFGCGKT) provides a ligand contact to ATP.

It belongs to the ATPase alpha/beta chains family. In terms of assembly, V-ATPase is a heteromultimeric enzyme composed of a peripheral catalytic V1 complex (components A to H) attached to an integral membrane V0 proton pore complex (components: a, c, c', c'', d, e, f and VOA1).

Its subcellular location is the vacuole membrane. It catalyses the reaction ATP + H2O + 4 H(+)(in) = ADP + phosphate + 5 H(+)(out). Catalytic subunit of the V1 complex of vacuolar(H+)-ATPase (V-ATPase), a multisubunit enzyme composed of a peripheral complex (V1) that hydrolyzes ATP and a membrane integral complex (V0) that translocates protons. V-ATPase is responsible for acidifying and maintaining the pH of intracellular compartments. This Encephalitozoon cuniculi (strain GB-M1) (Microsporidian parasite) protein is V-type proton ATPase catalytic subunit A (VMA1).